Here is a 354-residue protein sequence, read N- to C-terminus: Protein-glutamate methylesterase/protein-glutamine glutaminase 2 (354 aa).

One can recognise a Response regulatory domain in the interval R3 to D120. D54 carries the post-translational modification 4-aspartylphosphate. One can recognise a CheB-type methylesterase domain in the interval A164–Q354. Active-site residues include S176, H202, and D298.

Belongs to the CheB family. In terms of processing, phosphorylated by CheA. Phosphorylation of the N-terminal regulatory domain activates the methylesterase activity.

Its subcellular location is the cytoplasm. The enzyme catalyses [protein]-L-glutamate 5-O-methyl ester + H2O = L-glutamyl-[protein] + methanol + H(+). The catalysed reaction is L-glutaminyl-[protein] + H2O = L-glutamyl-[protein] + NH4(+). Involved in chemotaxis. Part of a chemotaxis signal transduction system that modulates chemotaxis in response to various stimuli. Catalyzes the demethylation of specific methylglutamate residues introduced into the chemoreceptors (methyl-accepting chemotaxis proteins or MCP) by CheR. Also mediates the irreversible deamidation of specific glutamine residues to glutamic acid. This Burkholderia thailandensis (strain ATCC 700388 / DSM 13276 / CCUG 48851 / CIP 106301 / E264) protein is Protein-glutamate methylesterase/protein-glutamine glutaminase 2.